Consider the following 285-residue polypeptide: (3S)-malyl-CoA thioesterase (285 aa).

2 residues coordinate substrate: R70 and E122. Residues E122 and D148 each coordinate Mg(2+).

Belongs to the HpcH/HpaI aldolase family. In terms of assembly, homodimer or homotrimer. Requires Mg(2+) as cofactor.

It catalyses the reaction (S)-malyl-CoA + H2O = (S)-malate + CoA + H(+). In terms of biological role, catalyzes the hydrolysis of (3S)-malyl-CoA to (3S)-malate and free CoA. Inactive towards beta-methylmalyl-CoA and other CoA esters. This is (3S)-malyl-CoA thioesterase from Cereibacter sphaeroides (strain ATCC 17029 / ATH 2.4.9) (Rhodobacter sphaeroides).